The primary structure comprises 157 residues: Phosphopantetheine adenylyltransferase (157 aa).

Thr-10 lines the substrate pocket. Residues 10 to 11 (TF) and His-18 each bind ATP. Substrate contacts are provided by Lys-42, Leu-74, and Arg-88. ATP-binding positions include 89–91 (GLR), Glu-99, and 124–130 (NAFISSS).

It belongs to the bacterial CoaD family. As to quaternary structure, homohexamer. Mg(2+) is required as a cofactor.

The protein localises to the cytoplasm. The catalysed reaction is (R)-4'-phosphopantetheine + ATP + H(+) = 3'-dephospho-CoA + diphosphate. The protein operates within cofactor biosynthesis; coenzyme A biosynthesis; CoA from (R)-pantothenate: step 4/5. Functionally, reversibly transfers an adenylyl group from ATP to 4'-phosphopantetheine, yielding dephospho-CoA (dPCoA) and pyrophosphate. The chain is Phosphopantetheine adenylyltransferase from Helicobacter pylori (strain J99 / ATCC 700824) (Campylobacter pylori J99).